An 820-amino-acid polypeptide reads, in one-letter code: DNA gyrase subunit A (820 aa).

Positions 31–496 constitute a Topo IIA-type catalytic domain; sequence IPDVRDGLKP…TLTNIEIEDL (466 aa). The active-site O-(5'-phospho-DNA)-tyrosine intermediate is the Y119. The GyrA-box signature appears at 523–529; the sequence is QRRGGKG.

This sequence belongs to the type II topoisomerase GyrA/ParC subunit family. As to quaternary structure, heterotetramer, composed of two GyrA and two GyrB chains. In the heterotetramer, GyrA contains the active site tyrosine that forms a transient covalent intermediate with DNA, while GyrB binds cofactors and catalyzes ATP hydrolysis.

Its subcellular location is the cytoplasm. The catalysed reaction is ATP-dependent breakage, passage and rejoining of double-stranded DNA.. Its function is as follows. A type II topoisomerase that negatively supercoils closed circular double-stranded (ds) DNA in an ATP-dependent manner to modulate DNA topology and maintain chromosomes in an underwound state. Negative supercoiling favors strand separation, and DNA replication, transcription, recombination and repair, all of which involve strand separation. Also able to catalyze the interconversion of other topological isomers of dsDNA rings, including catenanes and knotted rings. Type II topoisomerases break and join 2 DNA strands simultaneously in an ATP-dependent manner. The polypeptide is DNA gyrase subunit A (Lawsonia intracellularis (strain PHE/MN1-00)).